The primary structure comprises 26 residues: uncharacterized protein (26 aa).

Phosphorylated by YfhK.

Its function is as follows. Probable member of a two-component regulatory system YfhA/YfhK. This is an uncharacterized protein from Klebsiella oxytoca.